Reading from the N-terminus, the 386-residue chain is NifS-like protein (386 aa).

Pyridoxal 5'-phosphate is bound by residues 58–59 and 184–186; these read SE and SIN.

This sequence belongs to the class-V pyridoxal-phosphate-dependent aminotransferase family. NifS/IscS subfamily. Pyridoxal 5'-phosphate serves as cofactor.

It localises to the virion. The protein is NifS-like protein of Ornithodoros (relapsing fever ticks).